The following is a 254-amino-acid chain: Major prion protein (254 aa).

Positions 1-22 are cleaved as a signal peptide; the sequence is MANLGYWLLALFVTMWTDVGLC. Positions 23–38 are interaction with ADGRG6; that stretch reads KKRPKPGGWNTGGSRY. An interaction with GRB2, ERI3 and SYN1 region spans residues 23–231; sequence KKRPKPGGWN…QAYYDGRRSS (209 aa). Residues 25–104 form a disordered region; that stretch reads RPKPGGWNTG…HNQWNKPSKP (80 aa). At Pro-44 the chain carries Hydroxyproline. 5 consecutive repeat copies span residues 51-58, 59-66, 67-74, 75-82, and 83-90. The 5 X 8 AA tandem repeats of P-H-G-G-G-W-G-Q stretch occupies residues 51–90; that stretch reads PQGGTWGQPHGGGWGQPHGGSWGQPHGGSWGQPHGGGWGQ. The segment covering 54-94 has biased composition (gly residues); it reads GTWGQPHGGGWGQPHGGSWGQPHGGSWGQPHGGGWGQGGGT. His-60, Gly-61, Gly-62, His-68, Gly-69, Gly-70, His-76, Gly-77, Gly-78, His-84, Gly-85, and Gly-86 together coordinate Cu(2+). An intrachain disulfide couples Cys-178 to Cys-213. Asn-180 and Asn-196 each carry an N-linked (GlcNAc...) asparagine glycan. The GPI-anchor amidated serine moiety is linked to residue Ser-230. The propeptide at 231-254 is removed in mature form; that stretch reads SSTVLFSSPPVILLISFLIFLIVG.

It belongs to the prion family. In terms of assembly, monomer and homodimer. Has a tendency to aggregate into amyloid fibrils containing a cross-beta spine, formed by a steric zipper of superposed beta-strands. Soluble oligomers may represent an intermediate stage on the path to fibril formation. Copper binding may promote oligomerization. Interacts with GRB2, APP, ERI3/PRNPIP and SYN1. Mislocalized cytosolically exposed PrP interacts with MGRN1; this interaction alters MGRN1 subcellular location and causes lysosomal enlargement. Interacts with APP. Interacts with KIAA1191. Interacts with ADGRG6. In terms of processing, N-glycosylated. Highly expressed in the brain, lung, kidney and heart. Expressed at low levels in the liver and spleen.

The protein resides in the cell membrane. Its subcellular location is the golgi apparatus. Its primary physiological function is unclear. May play a role in neuronal development and synaptic plasticity. May be required for neuronal myelin sheath maintenance. May promote myelin homeostasis through acting as an agonist for ADGRG6 receptor. May play a role in iron uptake and iron homeostasis. Soluble oligomers are toxic to cultured neuroblastoma cells and induce apoptosis (in vitro). Association with GPC1 (via its heparan sulfate chains) targets PRNP to lipid rafts. Also provides Cu(2+) or Zn(2+) for the ascorbate-mediated GPC1 deaminase degradation of its heparan sulfate side chains. The sequence is that of Major prion protein (Prnp) from Mus musculus (Mouse).